Here is a 46-residue protein sequence, read N- to C-terminus: Protein PsbN (46 aa).

A helical membrane pass occupies residues 7 to 27 (GLSIAITFAVILLALTGFSIY).

The protein belongs to the PsbN family.

It is found in the cellular thylakoid membrane. Its function is as follows. May play a role in photosystem I and II biogenesis. The chain is Protein PsbN from Synechococcus elongatus (strain ATCC 33912 / PCC 7942 / FACHB-805) (Anacystis nidulans R2).